The chain runs to 580 residues: Probable inositol transporter 2 (580 aa).

The next 12 membrane-spanning stretches (helical) occupy residues 36–56, 71–91, 106–126, 129–149, 156–176, 189–209, 275–295, 315–335, 343–363, 452–472, 490–510, and 521–541; these read GIGG…LLYI, EMIV…GGWA, FLFL…LLVV, VFVG…ISEA, GALV…SYLI, WMLG…FTLP, GLIA…NTVM, LLSL…IYFI, LLII…GVFY, FGWF…PGMG, ICGG…AQSF, and WTFL…MVCV.

Belongs to the major facilitator superfamily. Sugar transporter (TC 2.A.1.1) family. Expressed in the tapetum, but not in pollen grains. Detected in leaf vascular tissue and in roots.

It is found in the cell membrane. Its activity is regulated as follows. Inhibited by nickel and to a lesser extent by cobalt. In terms of biological role, plasma membrane inositol-proton symporter. Specific for several inositol epimers, such as myoinositol and scylloinositol. D-chiroinositol, mucoinositol, alloinositol and pinitol are also transported with a lower activity. Not active with galactinol and phytate. This is Probable inositol transporter 2 (INT2) from Arabidopsis thaliana (Mouse-ear cress).